Here is a 247-residue protein sequence, read N- to C-terminus: MQYGTKLAEGKTKIIYAHPEDQSLAYMVQKDSISAGDGARRNEIDGKGAISGRTSANVFALLNRSGVRTHYQSDPEPGVMLVERCEMLPLEVVMRRLATGSYCRRHPETPEGTRFSPPLVEFFYKDDANHDPQIYLEGIVEKGLATAEEVSFIEQEGTRVFELLEQTWAERGVQLVDLKIEFGRTADGSLIVADMIDNDSWRLWPDGDKSKMLDKQIYRNLQTVTEEALQNLKAKYEEVRDITESFR.

This sequence belongs to the SAICAR synthetase family.

The enzyme catalyses 5-amino-1-(5-phospho-D-ribosyl)imidazole-4-carboxylate + L-aspartate + ATP = (2S)-2-[5-amino-1-(5-phospho-beta-D-ribosyl)imidazole-4-carboxamido]succinate + ADP + phosphate + 2 H(+). It functions in the pathway purine metabolism; IMP biosynthesis via de novo pathway; 5-amino-1-(5-phospho-D-ribosyl)imidazole-4-carboxamide from 5-amino-1-(5-phospho-D-ribosyl)imidazole-4-carboxylate: step 1/2. The chain is Phosphoribosylaminoimidazole-succinocarboxamide synthase from Herpetosiphon aurantiacus (strain ATCC 23779 / DSM 785 / 114-95).